The chain runs to 562 residues: MNTNDAKEYLARREIPQLFESLLNGLMCSKPEDPVEYLESCLQKVKELGGCDKVKWDTFVSQEKKTLPPLNGGQSRRSFLRNVMPENSNFPYRRYDRLPPIHQFSIESDTDLSETAELIEEYEVFDPTRPRPKIILVIGGPGSGKGTQSLKIAERYGFQYISVGELLRKKIHSTSSNRKWSLIAKIITTGELAPQETTITEIKQKLMQIPDEEGIVIDGFPRDVAQALSFEDQICTPDLVVFLACANQRLKERLLKRAEQQGRPDDNVKATQRRLMNFKQNAAPLVKYFQEKGLIMTFDADRDEDEVFYDISMAVDNKLFPNKEAAAGSSDLDPSMILDTGEIIDTGSDYEDQGDDQLNVFGEDTMGGFMEDLRKCKIIFIIGGPGSGKGTQCEKLVEKYGFTHLSTGELLREELASESERSKLIRDIMERGDLVPSGIVLELLKEAMVASLGDTRGFLIDGYPREVKQGEEFGRRIGDPQLVICMDCSADTMTNRLLQRSRSSLPVDDTTKTIAKRLEAYYRASIPVIAYYETKTQLHKINAEGTPEDVFLQLCTAIDSIF.

2 adenylate kinase regions span residues 133–316 (KIIL…MAVD) and 377–559 (KIIF…TAID). 142 to 147 (GSGKGT) contacts ATP. An NMP 1 region spans residues 162–193 (SVGELLRKKIHSTSSNRKWSLIAKIITTGELA). Residues Arg168, 191-193 (ELA), 219-222 (GFPR), and Gln226 contribute to the AMP site. The segment at 256–266 (KRAEQQGRPDD) is LID 1. Position 257 (Arg257) interacts with ATP. Residues Arg263 and Arg274 each coordinate AMP. Residue 386–391 (GSGKGT) coordinates ATP. Positions 406-435 (STGELLREELASESERSKLIRDIMERGDLV) are NMP 2. Residues Thr407, Arg412, 433 to 435 (DLV), 462 to 465 (GYPR), and Gln469 contribute to the AMP site. An LID 2 region spans residues 499–509 (QRSRSSLPVDD). Position 500 (Arg500) interacts with ATP. Arg517 is a binding site for AMP. Gly545 serves as a coordination point for ATP.

The protein belongs to the adenylate kinase family. As to quaternary structure, monomer. Interacts with YWHAZ. In terms of tissue distribution, brain specific.

Its subcellular location is the cytoplasm. It carries out the reaction AMP + ATP = 2 ADP. The enzyme catalyses a 2'-deoxyribonucleoside 5'-diphosphate + ATP = a 2'-deoxyribonucleoside 5'-triphosphate + ADP. The catalysed reaction is a ribonucleoside 5'-diphosphate + ATP = a ribonucleoside 5'-triphosphate + ADP. Its function is as follows. Nucleoside monophosphate (NMP) kinase that catalyzes the reversible transfer of the terminal phosphate group between nucleoside triphosphates and monophosphates. Active on AMP and dAMP with ATP as a donor. When GTP is used as phosphate donor, the enzyme phosphorylates AMP, CMP, and to a small extent dCMP. Also displays broad nucleoside diphosphate kinase activity. The chain is Adenylate kinase isoenzyme 5 (AK5) from Homo sapiens (Human).